The primary structure comprises 890 residues: Major vault protein (890 aa).

MVP repeat units follow at residues 2 to 56 (SMEE…VPPR), 57 to 111 (HYCM…DITP), 112 to 164 (LQVV…EIIQ), 165 to 217 (ATVI…DVVD), 218 to 272 (AVIL…GVVS), 273 to 323 (VTTL…IQNV), 324 to 379 (YVLS…ERQA), 380 to 457 (IPLD…KTRV), and 458 to 520 (VSYR…LLGP). The segment at 425–455 (ELLNKGQDPLADRGEKETSKTPKLSTPRNKT) is disordered. Over residues 434–444 (LADRGEKETSK) the composition is skewed to basic and acidic residues. Lysine 444 is covalently cross-linked (Glycyl lysine isopeptide (Lys-Gly) (interchain with G-Cter in SUMO2)).

As to quaternary structure, the vault ribonucleoprotein particle is a huge (400 A x 670 A) cage structure of 12.9 MDa. It consists of a dimer of half-vaults, with each half-vault comprising 39 identical major vault protein (MVP) chains, PARP4 and one or more vault RNAs (vRNAs). Interacts with TEP1. Interacts with PTEN and activated MAPK1. The phosphorylated protein interacts with the SH2 domains of PTPN11 and SRC. Interacts with APEX1. May interact with ZNF540. In terms of processing, phosphorylated on Tyr residues after EGF stimulation. Post-translationally, dephosphorylated by PTPN11.

Its subcellular location is the cytoplasm. The protein resides in the nucleus. Its function is as follows. Required for normal vault structure. Vaults are multi-subunit structures that may act as scaffolds for proteins involved in signal transduction. Vaults may also play a role in nucleo-cytoplasmic transport. Down-regulates IFNG-mediated STAT1 signaling and subsequent activation of JAK. Down-regulates SRC activity and signaling through MAP kinases. The polypeptide is Major vault protein (MVP) (Bos taurus (Bovine)).